The following is a 141-amino-acid chain: Hemoglobin subunit alpha-D (141 aa).

Residues 1-141 enclose the Globin domain; sequence VLTAEDRRLL…VADVLCEKYR (141 aa). Positions 58 and 87 each coordinate heme b.

This sequence belongs to the globin family. As to quaternary structure, heterotetramer of two alpha chains and two beta chains. Red blood cells.

In terms of biological role, involved in oxygen transport from the lung to the various peripheral tissues. This Drymarchon melanurus erebennus (Texas indigo snake) protein is Hemoglobin subunit alpha-D.